A 292-amino-acid chain; its full sequence is Ribosomal RNA small subunit methyltransferase A (292 aa).

S-adenosyl-L-methionine is bound by residues Asn-28, Leu-30, Gly-55, Glu-77, Asp-103, and Asn-123.

The protein belongs to the class I-like SAM-binding methyltransferase superfamily. rRNA adenine N(6)-methyltransferase family. RsmA subfamily.

The protein localises to the cytoplasm. The enzyme catalyses adenosine(1518)/adenosine(1519) in 16S rRNA + 4 S-adenosyl-L-methionine = N(6)-dimethyladenosine(1518)/N(6)-dimethyladenosine(1519) in 16S rRNA + 4 S-adenosyl-L-homocysteine + 4 H(+). Its function is as follows. Specifically dimethylates two adjacent adenosines (A1518 and A1519) in the loop of a conserved hairpin near the 3'-end of 16S rRNA in the 30S particle. May play a critical role in biogenesis of 30S subunits. This Methylobacterium radiotolerans (strain ATCC 27329 / DSM 1819 / JCM 2831 / NBRC 15690 / NCIMB 10815 / 0-1) protein is Ribosomal RNA small subunit methyltransferase A.